The primary structure comprises 351 residues: MTKISKIIDELNNQQADAAWITTPLNVYYFTGYRSEPHERLFALLIKKDGKQVLFCPKMEVEEVKASPFTGEIVGYLDTENPFSLYPQTINKLLIESEHLTVARQKQLISGFNVNSFGDVDLTIKQLRNIKSEDEISKIRKAAELADKCIEIGVSYLKEGVTEREVVNHIEQTIKQYGVNEMSFDTMVLFGDHAASPHGTPGDRRLKSNEYVLFDLGVIYEHYCSDMTRTIKFGEPSKEAQEIYNIVLEAETSAIQAIKPGIPLKDIDHIARNIISEKGYGEYFPHRLGHGLGLQEHEYQDVSSTNSNLLEAGMVITIEPGIYVPSVAGVRIEDDILVTNEGYEVLTHYEK.

5 residues coordinate Mn(2+): aspartate 215, aspartate 226, histidine 290, glutamate 319, and glutamate 333.

This sequence belongs to the peptidase M24B family. Mn(2+) serves as cofactor.

This is an uncharacterized protein from Staphylococcus aureus (strain MW2).